Reading from the N-terminus, the 289-residue chain is 4-hydroxybenzoate octaprenyltransferase (289 aa).

The next 9 helical transmembrane spans lie at 19–39 (IPIL…SHGL), 42–62 (ISYL…GCII), 85–105 (GQLS…VAFI), 107–127 (VLFL…LAIL), 134–154 (FFAI…FMAF), 165–185 (AWIF…IYAL), 211–231 (ILLF…YCDF), 233–253 (SFFY…YFLY), and 265–285 (FSAN…QYII).

The protein belongs to the UbiA prenyltransferase family. The cofactor is Mg(2+).

It is found in the cell inner membrane. The enzyme catalyses all-trans-octaprenyl diphosphate + 4-hydroxybenzoate = 4-hydroxy-3-(all-trans-octaprenyl)benzoate + diphosphate. Its pathway is cofactor biosynthesis; ubiquinone biosynthesis. Its function is as follows. Catalyzes the prenylation of para-hydroxybenzoate (PHB) with an all-trans polyprenyl group. Mediates the second step in the final reaction sequence of ubiquinone-8 (UQ-8) biosynthesis, which is the condensation of the polyisoprenoid side chain with PHB, generating the first membrane-bound Q intermediate 3-octaprenyl-4-hydroxybenzoate. This Francisella tularensis subsp. holarctica (strain FTNF002-00 / FTA) protein is 4-hydroxybenzoate octaprenyltransferase.